We begin with the raw amino-acid sequence, 292 residues long: Acetyl-coenzyme A carboxylase carboxyl transferase subunit beta (292 aa).

The 258-residue stretch at 35–292 (VFSQCEQCNS…LKLHAKKVTS (258 aa)) folds into the CoA carboxyltransferase N-terminal domain. Positions 39, 42, 58, and 61 each coordinate Zn(2+). The C4-type zinc-finger motif lies at 39-61 (CEQCNSAIYNKDLEHNYEVCPYC).

It belongs to the AccD/PCCB family. As to quaternary structure, acetyl-CoA carboxylase is a heterohexamer composed of biotin carboxyl carrier protein (AccB), biotin carboxylase (AccC) and two subunits each of ACCase subunit alpha (AccA) and ACCase subunit beta (AccD). Zn(2+) serves as cofactor.

It localises to the cytoplasm. The enzyme catalyses N(6)-carboxybiotinyl-L-lysyl-[protein] + acetyl-CoA = N(6)-biotinyl-L-lysyl-[protein] + malonyl-CoA. It functions in the pathway lipid metabolism; malonyl-CoA biosynthesis; malonyl-CoA from acetyl-CoA: step 1/1. In terms of biological role, component of the acetyl coenzyme A carboxylase (ACC) complex. Biotin carboxylase (BC) catalyzes the carboxylation of biotin on its carrier protein (BCCP) and then the CO(2) group is transferred by the transcarboxylase to acetyl-CoA to form malonyl-CoA. This Acholeplasma laidlawii (strain PG-8A) protein is Acetyl-coenzyme A carboxylase carboxyl transferase subunit beta.